Consider the following 374-residue polypeptide: Coiled-coil domain-containing protein 89 (374 aa).

Residues M1–E38 are disordered. Phosphothreonine is present on T16. The span at P19 to N32 shows a compositional bias: basic and acidic residues. Residues P19–A350 adopt a coiled-coil conformation.

Belongs to the CCDC89 family. Interacts with HEY1.

It is found in the cytoplasm. The protein resides in the nucleus. This chain is Coiled-coil domain-containing protein 89 (CCDC89), found in Macaca fascicularis (Crab-eating macaque).